The chain runs to 412 residues: Argininosuccinate synthase (412 aa).

Residues 15-23 (AYSGGLDTS) and Ala-42 each bind ATP. 2 residues coordinate L-citrulline: Tyr-93 and Ser-98. Residue Gly-123 coordinates ATP. L-aspartate is bound by residues Thr-125, Asn-129, and Asp-130. Asn-129 is an L-citrulline binding site. The L-citrulline site is built by Arg-133, Ser-185, Ser-194, Glu-270, and Tyr-282.

This sequence belongs to the argininosuccinate synthase family. Type 1 subfamily. As to quaternary structure, homotetramer.

The protein resides in the cytoplasm. The enzyme catalyses L-citrulline + L-aspartate + ATP = 2-(N(omega)-L-arginino)succinate + AMP + diphosphate + H(+). It functions in the pathway amino-acid biosynthesis; L-arginine biosynthesis; L-arginine from L-ornithine and carbamoyl phosphate: step 2/3. The sequence is that of Argininosuccinate synthase from Psychrobacter cryohalolentis (strain ATCC BAA-1226 / DSM 17306 / VKM B-2378 / K5).